The following is a 194-amino-acid chain: Peptidyl-tRNA hydrolase (194 aa).

Residue Tyr17 coordinates tRNA. His22 serves as the catalytic Proton acceptor. Positions 68, 70, and 116 each coordinate tRNA.

This sequence belongs to the PTH family. As to quaternary structure, monomer.

Its subcellular location is the cytoplasm. It catalyses the reaction an N-acyl-L-alpha-aminoacyl-tRNA + H2O = an N-acyl-L-amino acid + a tRNA + H(+). Functionally, hydrolyzes ribosome-free peptidyl-tRNAs (with 1 or more amino acids incorporated), which drop off the ribosome during protein synthesis, or as a result of ribosome stalling. Catalyzes the release of premature peptidyl moieties from peptidyl-tRNA molecules trapped in stalled 50S ribosomal subunits, and thus maintains levels of free tRNAs and 50S ribosomes. The polypeptide is Peptidyl-tRNA hydrolase (Azotobacter vinelandii (strain DJ / ATCC BAA-1303)).